Here is a 306-residue protein sequence, read N- to C-terminus: Agmatinase (306 aa).

Residues histidine 126, aspartate 149, histidine 151, aspartate 153, aspartate 230, and aspartate 232 each coordinate Mn(2+).

Belongs to the arginase family. Agmatinase subfamily. The cofactor is Mn(2+).

It catalyses the reaction agmatine + H2O = urea + putrescine. The protein operates within amine and polyamine biosynthesis; putrescine biosynthesis via agmatine pathway; putrescine from agmatine: step 1/1. In terms of biological role, catalyzes the formation of putrescine from agmatine. The sequence is that of Agmatinase from Salmonella dublin (strain CT_02021853).